Here is a 363-residue protein sequence, read N- to C-terminus: MTVSADFTPLLHKAALGRPLDSHEAETAFHAIMAGEVDPVQLAAFLTALKLRGETFAELTGAVQAVRHHMTVLPDVPAGAIDVCGTGGDGLKTLNVSTAVAFVLAGLGVPVAKHGNRALSSASGATDVLEVLGIPPTDDLELQGRRLREDGLVFLAAPQHHPAMRHAAPVRKALGFRTLFNLLGPLCNPAQVRHQLIGVFDGRWCEPVARALGALGSLSVWVVHGSTEEGGSDELTLAGPSQVSAWQDETLFSFRIEPDMAGLAAAPISAIRGGDAQTNAAALLALLDGAGGAYRDTVLLNAAAALHVAGRGDIVKAGVIDVPAFRRNVGMAADSIDRGLARAALEAARMSAHSIAPKDAGRS.

Residues Gly85, 88–89, Thr93, 95–98, 113–121, and Ala125 each bind 5-phospho-alpha-D-ribose 1-diphosphate; these read GD, NVST, and KHGNRALSS. Gly85 serves as a coordination point for anthranilate. Ser97 provides a ligand contact to Mg(2+). Asn116 provides a ligand contact to anthranilate. An anthranilate-binding site is contributed by Arg171. 2 residues coordinate Mg(2+): Asp233 and Glu234.

It belongs to the anthranilate phosphoribosyltransferase family. Homodimer. The cofactor is Mg(2+).

It carries out the reaction N-(5-phospho-beta-D-ribosyl)anthranilate + diphosphate = 5-phospho-alpha-D-ribose 1-diphosphate + anthranilate. The protein operates within amino-acid biosynthesis; L-tryptophan biosynthesis; L-tryptophan from chorismate: step 2/5. Catalyzes the transfer of the phosphoribosyl group of 5-phosphorylribose-1-pyrophosphate (PRPP) to anthranilate to yield N-(5'-phosphoribosyl)-anthranilate (PRA). This is Anthranilate phosphoribosyltransferase from Gluconobacter oxydans (strain 621H) (Gluconobacter suboxydans).